The primary structure comprises 691 residues: MEIAPQEAPPVPGADGDIEEAPAEAGSPSPASPPADGRLKAAAKRVTFPSDEDIVSGAVEPKDPWRHAQNVTVDEVIGAYKQACQKLNCRQIPKLLRQLQEFTDLGHRLDCLDLKGEKLDYKTCEALEEVFKRLQFKVVDLEQTNLDEDGASALFDMIEYYESATHLNISFNKHIGTRGWQAAAHMMRKTSCLQYLDARNTPLLDHSAPFVARALRIRSSLAVLHLENASLSGRPLMLLATALKMNMNLRELYLADNKLNGLQDSAQLGNLLKFNCSLQILDLRNNHVLDSGLAYICEGLKEQRKGLVTLVLWNNQLTHTGMAFLGMTLPHTQSLETLNLGHNPIGNEGVRHLKNGLISNRSVLRLGLASTKLTCEGAVAVAEFIAESPRLLRLDLRENEIKTGGLMALSLALKVNHSLLRLDLDREPKKEAVKSFIETQKALLAEIQNGCKRNLVLAREREEKEQPPQLSASMPETTATEPQPDDEPAAGVQNGAPSPAPSPDSDSDSDSDGEEEEEEEGERDETPCPALVPPTDSLGPGDRSPPGSPSTPTEQRISVSSPGRGHKVFVVTRVESPPERAEPPASPTPPSPPPPPSPPASPSLPPAGAIDTRDTGSSEPQPPPEPPRSGPPLPNGLKPEFALALPPEPPPGPEVKGGSCGLEHELSCSKNEKELEELLLEASQESGQETL.

A disordered region spans residues 1-43; sequence MEIAPQEAPPVPGADGDIEEAPAEAGSPSPASPPADGRLKAAA. Phosphoserine is present on residues S50 and S56. LRR repeat units lie at residues 220-240, 248-269, 277-297, 306-326, and 334-354; these read SLAV…MLLA, NLRE…AQLG, SLQI…AYIC, GLVT…AFLG, and SLET…RHLK. Residues 460–662 are disordered; sequence EREEKEQPPQ…PEVKGGSCGL (203 aa). Over residues 468 to 481 the composition is skewed to polar residues; that stretch reads PQLSASMPETTATE. Positions 505-523 are enriched in acidic residues; the sequence is SDSDSDSDGEEEEEEEGER. The residue at position 561 (S561) is a Phosphoserine. 2 stretches are compositionally biased toward pro residues: residues 584–605 and 620–634; these read PASP…PSLP and PQPP…PPLP.

Belongs to the PPP1R37 family. As to quaternary structure, interacts with PPP1CA.

Functionally, inhibits phosphatase activity of protein phosphatase 1 (PP1) complexes. The polypeptide is Protein phosphatase 1 regulatory subunit 37 (PPP1R37) (Homo sapiens (Human)).